We begin with the raw amino-acid sequence, 74 residues long: Exodeoxyribonuclease 7 small subunit (74 aa).

The protein belongs to the XseB family. In terms of assembly, heterooligomer composed of large and small subunits.

The protein resides in the cytoplasm. The catalysed reaction is Exonucleolytic cleavage in either 5'- to 3'- or 3'- to 5'-direction to yield nucleoside 5'-phosphates.. In terms of biological role, bidirectionally degrades single-stranded DNA into large acid-insoluble oligonucleotides, which are then degraded further into small acid-soluble oligonucleotides. This Clostridium beijerinckii (strain ATCC 51743 / NCIMB 8052) (Clostridium acetobutylicum) protein is Exodeoxyribonuclease 7 small subunit.